Here is a 514-residue protein sequence, read N- to C-terminus: Protein Tube (514 aa).

5 disordered regions span residues 226-250 (VPQQLENGTSSTVPVPPPRAARSSR), 255-274 (TASNVAPTTASNAPSASNTA), 324-343 (LDAGKSDNASNGRSSASTST), 366-385 (ASDATQITSKSTATKTVPDM), and 413-514 (NGAK…ELQQ). Low complexity predominate over residues 259–274 (VAPTTASNAPSASNTA). Residues 422 to 433 (ADNNSSGTNSLS) are compositionally biased toward polar residues. Residues 434 to 460 (NDDDEQKEDDDDDDDDDVVDVDDEEAD) show a composition bias toward acidic residues. Residues 477–514 (TTVTCTSGENSFEFTNDSSSASNDDYTNNIPNLSELQQ) are compositionally biased toward polar residues.

Maternal and zygotic gene product.

It localises to the cytoplasm. Functionally, required for the determination of embryonic dorsoventral polarity. Is involved in transduction of information regulating nuclear import of dorsal protein. In Drosophila virilis (Fruit fly), this protein is Protein Tube (tub).